The chain runs to 1001 residues: Kinesin-like protein KIN-14P (1001 aa).

In terms of domain architecture, Calponin-homology (CH) spans 53 to 172 (AIRRYEAANW…CVLSLRSFSE (120 aa)). Positions 284 to 300 (NESVKHALDPNDDKLLS) are enriched in basic and acidic residues. Residues 284–322 (NESVKHALDPNDDKLLSRADTPPEMESTCTCSTGNMDEE) form a disordered region. The 323-residue stretch at 426–748 (NIRVYCRVRP…LKFAERVATV (323 aa)) folds into the Kinesin motor domain. 509–516 (GQTGSGKT) serves as a coordination point for ATP. Residues 756–784 (NKEGGEVKELKEQIACLKAALAKKDGETE) are a coiled coil. Disordered stretches follow at residues 804 to 830 (PPAF…QKKR) and 890 to 1001 (EPQW…SAKK). Polar residues predominate over residues 972–984 (PSASTKNGKQLSL).

Belongs to the TRAFAC class myosin-kinesin ATPase superfamily. Kinesin family. KIN-14 subfamily.

The sequence is that of Kinesin-like protein KIN-14P from Oryza sativa subsp. japonica (Rice).